The following is a 207-amino-acid chain: MADS-box protein AGL71 (207 aa).

Positions 1–61 (MVRGKIEIKK…GRLHEYSSSQ (61 aa)) constitute an MADS-box domain. The K-box domain maps to 88–178 (LQELKMEIDR…LEEVNMHHSS (91 aa)).

The protein resides in the nucleus. Functionally, MADS-box transcription factor that acts with AGL42 and AGL72 in the control of flowering time. Promotes flowering at the shoot apical and axillary meristems. Seems to act through a gibberellin-dependent pathway. Interacts genetically with SOC1 and its expression is directly regulated by SOC1. The polypeptide is MADS-box protein AGL71 (AGL71) (Arabidopsis thaliana (Mouse-ear cress)).